The chain runs to 450 residues: Tubulin beta-6 chain (450 aa).

GTP is bound by residues Gln11, Glu71, Ser140, Gly144, Thr145, Gly146, Asn206, and Asn228. Glu71 is a binding site for Mg(2+). Residues 429 to 450 (DATVEDEEEYEGEEGLDENYET) form a disordered region. A compositionally biased stretch (acidic residues) spans 431–450 (TVEDEEEYEGEEGLDENYET).

The protein belongs to the tubulin family. As to quaternary structure, dimer of alpha and beta chains. A typical microtubule is a hollow water-filled tube with an outer diameter of 25 nm and an inner diameter of 15 nM. Alpha-beta heterodimers associate head-to-tail to form protofilaments running lengthwise along the microtubule wall with the beta-tubulin subunit facing the microtubule plus end conferring a structural polarity. Microtubules usually have 13 protofilaments but different protofilament numbers can be found in some organisms and specialized cells. Mg(2+) serves as cofactor.

It is found in the cytoplasm. Its subcellular location is the cytoskeleton. Tubulin is the major constituent of microtubules, a cylinder consisting of laterally associated linear protofilaments composed of alpha- and beta-tubulin heterodimers. Microtubules grow by the addition of GTP-tubulin dimers to the microtubule end, where a stabilizing cap forms. Below the cap, tubulin dimers are in GDP-bound state, owing to GTPase activity of alpha-tubulin. This chain is Tubulin beta-6 chain, found in Gossypium hirsutum (Upland cotton).